A 91-amino-acid chain; its full sequence is MSITQERKQKLIKEYAITENDTGSSAVQCAILTERINNLTEHFKFNHKDHTSRRGLLILVGRRRRLLNYIKKNNVSEYLDLISKLGIRKIK.

Belongs to the universal ribosomal protein uS15 family. Part of the 30S ribosomal subunit. Forms a bridge to the 50S subunit in the 70S ribosome, contacting the 23S rRNA.

Its function is as follows. One of the primary rRNA binding proteins, it binds directly to 16S rRNA where it helps nucleate assembly of the platform of the 30S subunit by binding and bridging several RNA helices of the 16S rRNA. Functionally, forms an intersubunit bridge (bridge B4) with the 23S rRNA of the 50S subunit in the ribosome. This is Small ribosomal subunit protein uS15 from Rickettsia felis (strain ATCC VR-1525 / URRWXCal2) (Rickettsia azadi).